Here is a 90-residue protein sequence, read N- to C-terminus: ATP synthase subunit e, mitochondrial (90 aa).

At S2 the chain carries N-acetylserine. The helical transmembrane segment at 7–23 (VLRWSALGAGVVYGFVH) threads the bilayer.

As to quaternary structure, F-type ATP synthases have 2 components, the catalytic core F(1) and the membrane-embedded component F(0), linked together by a central stalk and a peripheral stalk. The central stalk, also called rotor shaft, is often seen as part of F(1). The peripheral stalk is seen as part of F(0). F(0) contains the membrane channel next to the rotor. F-type ATP synthases form dimers but each monomer functions independently in ATP generation. The dimer consists of 17 different polypeptides: ATP1 (subunit alpha, 3 molecules per monomer, part of F(1)), ATP2 (subunit beta, 3 copies per monomer, part of F(1)), ATP3 (subunit gamma, part of the central stalk), ATP4 (subunit b, part of the peripheral stalk), ATP5/OSCP (subunit 5/OSCP, part of the peripheral stalk), ATP6 (subunit a, part of the peripheral stalk), ATP7 (subunit d, part of the peripheral stalk), ATP8 (subunit 8, part of the peripheral stalk), OLI1 (subunit c, part of the rotor, 10 molecules per monomer), ATP14 (subunit h, part of the peripheral stalk), ATP15 (subunit epsilon, part of the central stalk), ATP16 (subunit delta, part of the central stalk), ATP17 (subunit f, part of the peripheral stalk), ATP18 (subunit i/j, part of the peripheral stalk), ATP19 (subunit k, dimer-specific, at interface between monomers), ATP20 (subunit g, at interface between monomers), TIM11 (subunit e, at interface between monomers).

It is found in the mitochondrion inner membrane. Mitochondrial membrane ATP synthase (F(1)F(0) ATP synthase or Complex V) produces ATP from ADP in the presence of a proton gradient across the membrane which is generated by electron transport complexes of the respiratory chain. F-type ATP synthases consist of two structural domains, F(1) - containing the extramembraneous catalytic core, and F(0) - containing the membrane proton channel, linked together by a central stalk and a peripheral stalk. During catalysis, ATP synthesis in the catalytic domain of F(1) is coupled via a rotary mechanism of the central stalk subunits to proton translocation. Part of the complex F(0) domain. Minor subunit located with subunit a/ATP6 in the membrane. Together with subunit g/ATP20, probably contributes to membrane curvature at the site of the ATP synthase dimer, ultimately contributing to formation of cristae. The protein is ATP synthase subunit e, mitochondrial of Yarrowia lipolytica (strain CLIB 122 / E 150) (Yeast).